Reading from the N-terminus, the 201-residue chain is NADH-quinone oxidoreductase subunit C 1 (201 aa).

The protein belongs to the complex I 30 kDa subunit family. In terms of assembly, NDH-1 is composed of 14 different subunits. Subunits NuoB, C, D, E, F, and G constitute the peripheral sector of the complex.

It localises to the cell inner membrane. The catalysed reaction is a quinone + NADH + 5 H(+)(in) = a quinol + NAD(+) + 4 H(+)(out). Functionally, NDH-1 shuttles electrons from NADH, via FMN and iron-sulfur (Fe-S) centers, to quinones in the respiratory chain. The immediate electron acceptor for the enzyme in this species is believed to be ubiquinone. Couples the redox reaction to proton translocation (for every two electrons transferred, four hydrogen ions are translocated across the cytoplasmic membrane), and thus conserves the redox energy in a proton gradient. The protein is NADH-quinone oxidoreductase subunit C 1 of Rhizobium meliloti (strain 1021) (Ensifer meliloti).